Consider the following 319-residue polypeptide: NADH-quinone oxidoreductase subunit H 1 (319 aa).

8 helical membrane passes run 1–21, 74–94, 107–127, 147–167, 179–199, 238–258, 262–282, and 293–313; these read MIGL…LLVV, FAYI…FGVI, VGVL…VLGA, LAYE…AGSL, VWFV…GVAA, VLLV…GPWL, IWFG…RATL, and FAWK…GIVV.

It belongs to the complex I subunit 1 family. In terms of assembly, NDH-1 is composed of 14 different subunits. Subunits NuoA, H, J, K, L, M, N constitute the membrane sector of the complex.

The protein resides in the cell inner membrane. The enzyme catalyses a quinone + NADH + 5 H(+)(in) = a quinol + NAD(+) + 4 H(+)(out). Its function is as follows. NDH-1 shuttles electrons from NADH, via FMN and iron-sulfur (Fe-S) centers, to quinones in the respiratory chain. The immediate electron acceptor for the enzyme in this species is believed to be ubiquinone. Couples the redox reaction to proton translocation (for every two electrons transferred, four hydrogen ions are translocated across the cytoplasmic membrane), and thus conserves the redox energy in a proton gradient. This subunit may bind ubiquinone. The sequence is that of NADH-quinone oxidoreductase subunit H 1 from Rhodopseudomonas palustris (strain BisB5).